Here is a 232-residue protein sequence, read N- to C-terminus: Lipopolysaccharide core heptose(II) kinase WaaY (232 aa).

Belongs to the protein kinase superfamily. RfaY/WaaY family.

It catalyses the reaction alpha-D-Glc-(1-&gt;3)-[L-alpha-D-Hep-(1-&gt;7)]-L-alpha-D-Hep-(1-&gt;3)-4-O-PO3(2-)-L-alpha-D-Hep-(1-&gt;5)-[alpha-Kdo-(2-&gt;4)]-alpha-Kdo-(2-&gt;6)-lipid A + ATP = alpha-D-Glc-(1-&gt;3)-[L-alpha-D-Hep-(1-&gt;7)]-4-O-PO3(2-)-L-alpha-D-Hep-(1-&gt;3)-4-O-PO3(2-)-L-alpha-D-Hep-(1-&gt;5)-[alpha-Kdo-(2-&gt;4)]-alpha-Kdo-(2-&gt;6)-lipid A + ADP + H(+). It functions in the pathway bacterial outer membrane biogenesis; LPS core biosynthesis. Its function is as follows. Kinase involved in the biosynthesis of the core oligosaccharide region of lipopolysaccharide (LPS). Catalyzes the phosphorylation of the second heptose unit (HepII) of the inner core. The chain is Lipopolysaccharide core heptose(II) kinase WaaY from Salmonella typhimurium (strain LT2 / SGSC1412 / ATCC 700720).